Here is an 89-residue protein sequence, read N- to C-terminus: RNA-binding protein Hfq (89 aa).

Residues aspartate 9 to leucine 68 enclose the Sm domain.

It belongs to the Hfq family. As to quaternary structure, homohexamer.

RNA chaperone that binds small regulatory RNA (sRNAs) and mRNAs to facilitate mRNA translational regulation in response to envelope stress, environmental stress and changes in metabolite concentrations. Also binds with high specificity to tRNAs. In Shewanella denitrificans (strain OS217 / ATCC BAA-1090 / DSM 15013), this protein is RNA-binding protein Hfq.